The following is a 720-amino-acid chain: DNA gyrase subunit B (720 aa).

Residues 1–26 (MVDAMPENPAEEPTAASAAPNPEAVP) show a composition bias toward low complexity. The interval 1 to 42 (MVDAMPENPAEEPTAASAAPNPEAVPDAVGQPEAPVKDRKVP) is disordered. A Toprim domain is found at 498–612 (CEVYIVEGDS…AGHVFLAQPP (115 aa)). Residues E504, D577, and D579 each coordinate Mg(2+).

This sequence belongs to the type II topoisomerase GyrB family. As to quaternary structure, heterotetramer, composed of two GyrA and two GyrB chains. In the heterotetramer, GyrA contains the active site tyrosine that forms a transient covalent intermediate with the DNA, while GyrB binds cofactors and catalyzes ATP hydrolysis. Mg(2+) is required as a cofactor. It depends on Mn(2+) as a cofactor. Ca(2+) serves as cofactor.

The protein resides in the cytoplasm. It catalyses the reaction ATP-dependent breakage, passage and rejoining of double-stranded DNA.. Its activity is regulated as follows. Supercoiling activity inhibited by novobiocin and coumermycin, DNA wrapping around gyrase is not inhibited. In terms of biological role, a type II topoisomerase that negatively supercoils DNA in an ATP-dependent manner. About 140 bp of DNA wraps around gyrase in the presence or absence of ATP, when ATP is added negative supercoils are made. A type II topoisomerase that negatively supercoils closed circular double-stranded (ds) DNA in an ATP-dependent manner to modulate DNA topology and maintain chromosomes in an underwound state. Negative supercoiling favors strand separation, and DNA replication, transcription, recombination and repair, all of which involve strand separation. Also able to catalyze the interconversion of other topological isomers of dsDNA rings, including catenanes and knotted rings. Type II topoisomerases break and join 2 DNA strands simultaneously in an ATP-dependent manner. The sequence is that of DNA gyrase subunit B from Micrococcus luteus (strain ATCC 4698 / DSM 20030 / JCM 1464 / CCM 169 / CCUG 5858 / IAM 1056 / NBRC 3333 / NCIMB 9278 / NCTC 2665 / VKM Ac-2230) (Micrococcus lysodeikticus).